We begin with the raw amino-acid sequence, 361 residues long: Peptide chain release factor 1 (361 aa).

Q237 is modified (N5-methylglutamine). Residues 287–306 (KRAAEEASTRKSLVGSGDRS) are disordered.

It belongs to the prokaryotic/mitochondrial release factor family. Methylated by PrmC. Methylation increases the termination efficiency of RF1.

The protein localises to the cytoplasm. In terms of biological role, peptide chain release factor 1 directs the termination of translation in response to the peptide chain termination codons UAG and UAA. This Alteromonas mediterranea (strain DSM 17117 / CIP 110805 / LMG 28347 / Deep ecotype) protein is Peptide chain release factor 1.